A 492-amino-acid polypeptide reads, in one-letter code: Beclin 1-associated autophagy-related key regulator (492 aa).

Residue serine 29 is modified to Phosphoserine. A coiled-coil region spans residues 70–180 (RDRERFIDKK…KLGDLVEKKT (111 aa)). 2 disordered regions span residues 213–232 (TSGR…MTSS) and 411–473 (GVAG…AGGM). Over residues 222 to 232 (SSETDSAMTSS) the composition is skewed to polar residues. Serine 416 bears the Phosphoserine mark. Residues 424-433 (VSDEETDLGT) are compositionally biased toward acidic residues. Threonine 429 is subject to Phosphothreonine. Residues 447 to 473 (PSQPVEVSQSQSTQASPPIASSSAGGM) show a composition bias toward low complexity.

This sequence belongs to the ATG14 family. Forms homooligomers; homo-oligomerization is essential for the roles in membrane tethering and enhancement of SNARE-mediated fusion. Component of the PI3K (PI3KC3/PI3K-III/class III phosphatidylinositol 3-kinase) complex I (PI3KC3-C1) in which the core composed of the catalytic subunit PIK3C3, the regulatory subunit PIK3R4 and BECN1 is associated with ATG14. PI3KC3-C1 displays a V-shaped architecture with PIK3R4 serving as a bridge between PIK3C3 and the ATG14:BECN1 subcomplex. PI3KC3-C1 can associate with further regulatory subunits. Interacts with PIK3CB. Interacts (via coiled-coil domain) with BECN2 (via coiled-coil domain); this interaction is tighter than BECN2 self-association. Interacts with the STX17-SNAP29 binary t-SNARE complex. Interacts with NRBF2. Interacts with PIK3C3 and BECN1; this interaction is increased in the absence of TMEM39A. Interacts with STEEP1; the interaction is required for trafficking of STING1 from the endoplasmic reticulum. Interacts with ARMC3 (via ARM domains). In terms of processing, ubiquitinated via 'Lys-6', 'Lys-11' and 'Lys-63'-linked polyubiquitin chains on multiple lysines by MARCHF7, leading to ATG14 aggregation and loss of interaction with STX17.

Its subcellular location is the cytoplasm. It localises to the endoplasmic reticulum membrane. It is found in the preautophagosomal structure membrane. In terms of biological role, required for both basal and inducible autophagy. Determines the localization of the autophagy-specific PI3-kinase complex. Plays a role in autophagosome formation and MAP1LC3/LC3 conjugation to phosphatidylethanolamine. Promotes BECN1 translocation from the trans-Golgi network to autophagosomes. Enhances PIK3C3 activity in a BECN1-dependent manner. Essential for the autophagy-dependent phosphorylation of BECN1. Stimulates the phosphorylation of BECN1, but suppresses the phosphorylation PIK3C3 by AMPK. Binds to STX17-SNAP29 binary t-SNARE complex on autophagosomes and primes it for VAMP8 interaction to promote autophagosome-endolysosome fusion. Modulates the hepatic lipid metabolism. This is Beclin 1-associated autophagy-related key regulator from Rattus norvegicus (Rat).